A 379-amino-acid chain; its full sequence is Probable protein arginine N-methyltransferase 6.1 (379 aa).

Positions 1 to 35 (MLPSHLNGHSPLARRRPRLSAASPPATGDSDAAAA) are disordered. The span at 19–35 (LSAASPPATGDSDAAAA) shows a compositional bias: low complexity. The SAM-dependent MTase PRMT-type domain occupies 45 to 379 (DRIYFQSYSH…FLNIQLDCTM (335 aa)). Positions 58, 67, 91, 113, and 142 each coordinate S-adenosyl-L-methionine. Active-site residues include Glu-156 and Glu-165.

Belongs to the class I-like SAM-binding methyltransferase superfamily. Protein arginine N-methyltransferase family. PRMT6 subfamily.

Functionally, arginine methyltransferase that can both catalyze the formation of omega-N monomethylarginine (MMA) and asymmetrical dimethylarginine (aDMA). The protein is Probable protein arginine N-methyltransferase 6.1 (PRMT6.1) of Oryza sativa subsp. indica (Rice).